The following is an 808-amino-acid chain: Sucrose synthase (808 aa).

A GT-B glycosyltransferase region spans residues 271-753; that stretch reads MLFRIALISP…GIERVYSTYT (483 aa).

It belongs to the glycosyltransferase 1 family. In terms of assembly, probably a homotetramer.

The catalysed reaction is an NDP-alpha-D-glucose + D-fructose = a ribonucleoside 5'-diphosphate + sucrose + H(+). The enzyme catalyses ADP-alpha-D-glucose + D-fructose = sucrose + ADP + H(+). Catalyzes the reversible conversion of sucrose and a nucleotide disphosphate (NDP) into fructose and NDP-glucose; although the reaction is freely reversible in vitro, the physiological reaction seems to be sucrose cleavage. Unlike characterized plant enzymes prefers ADP as a cosubstrate, whereas plants prefer UDP. Its preference for ADP over UDP suggests it may directly link sucrose and glycogen metabolism. The protein is Sucrose synthase of Thermosynechococcus vestitus (strain NIES-2133 / IAM M-273 / BP-1).